We begin with the raw amino-acid sequence, 195 residues long: Glycine-rich protein A3 (195 aa).

Disordered stretches follow at residues 23 to 103 (AGGG…GVAG) and 159 to 182 (VMES…GSNL). The segment covering 47-77 (PAGGGYPPQGYPPAGGGYPPQGYPPAGGGYP) has biased composition (gly residues). Over residues 82-94 (PPAGHHSGSSAPH) the composition is skewed to low complexity. Residues 163-175 (LSRESTGRARSTD) are compositionally biased toward basic and acidic residues.

This chain is Glycine-rich protein A3, found in Daucus carota (Wild carrot).